The primary structure comprises 485 residues: Acyl transferase 1 (485 aa).

The active-site Proton acceptor is His-172.

It belongs to the plant acyltransferase family. As to expression, highly expressed in young panicles. Expressed in leaf sheaths and panicles.

Involved in defense against pathogens. May contribute to disease resistance by potentiating disease resistance signaling, or producing phytoalexin-like secondary products. The chain is Acyl transferase 1 from Oryza sativa subsp. japonica (Rice).